We begin with the raw amino-acid sequence, 560 residues long: MLWNWVALVGGIISAVVFSYILQAAYFHELSLLSAVILGIVLIAALALRAFAGKKSVQASYFASTKVKHELRSLIYRKLASMPLNQVNQQSTSSIIQVASEGVEQLEIYFGRYLPQLFYSLLAPLTLFAFLIFFSFKTAIILLICVPLIPMSIIAVNKIAKKLLAKYWSIYVGLGSSFLDNLQGLITLKIYQDDAYKAKAMDKEAEHFRKITMKVLTMQLNSVSLMDLLAYGGAAIGILTALLQFQNAQLSVLGVILFILLSSEFFIPLRLLGSFFHVAMNGKAASDKIFTLLDTPVETQQSAVDFEAKNNVQVEIKDLHFSYSEEKPAITGLNLSILPNQLSVFVGKSGCGKSTLVSLLMGFNKAQQGEILFNGQNALNIDRTSFYQKVSLVSHSSYVFKGTLRENMTMAKIDATDEQIYACLEQVNLAQFVRDNGGLDMQLLSRGANLSGGQIQRLALARALLHNAELYIFDEATSNIDVESEEIILQFIQQFKQQKTIVMISHRLANAVNADCINVLDQGKLIEQGTHKELMEKQGAYAEMFQQQKDLEQIREVANA.

One can recognise an ABC transmembrane type-1 domain in the interval 1–281 (MLWNWVALVG…LGSFFHVAMN (281 aa)). 7 helical membrane passes run 2 to 22 (LWNW…SYIL), 32 to 52 (LLSA…RAFA), 108 to 128 (IYFG…LTLF), 138 to 160 (TAII…NKIA), 168 to 188 (WSIY…LITL), 223 to 243 (VSLM…TALL), and 249 to 269 (QLSV…FIPL). One can recognise an ABC transporter domain in the interval 314 to 547 (VEIKDLHFSY…QGAYAEMFQQ (234 aa)). 347 to 354 (GKSGCGKS) provides a ligand contact to ATP.

Belongs to the ABC transporter superfamily.

It is found in the cell inner membrane. This is an uncharacterized protein from Haemophilus influenzae (strain ATCC 51907 / DSM 11121 / KW20 / Rd).